We begin with the raw amino-acid sequence, 280 residues long: Urease accessory protein UreD 1 (280 aa).

It belongs to the UreD family. In terms of assembly, ureD, UreF and UreG form a complex that acts as a GTP-hydrolysis-dependent molecular chaperone, activating the urease apoprotein by helping to assemble the nickel containing metallocenter of UreC. The UreE protein probably delivers the nickel.

It localises to the cytoplasm. Required for maturation of urease via the functional incorporation of the urease nickel metallocenter. This is Urease accessory protein UreD 1 from Brucella melitensis biotype 1 (strain ATCC 23456 / CCUG 17765 / NCTC 10094 / 16M).